A 214-amino-acid chain; its full sequence is Probable nicotinate-nucleotide adenylyltransferase (214 aa).

This sequence belongs to the NadD family.

It carries out the reaction nicotinate beta-D-ribonucleotide + ATP + H(+) = deamido-NAD(+) + diphosphate. The protein operates within cofactor biosynthesis; NAD(+) biosynthesis; deamido-NAD(+) from nicotinate D-ribonucleotide: step 1/1. In terms of biological role, catalyzes the reversible adenylation of nicotinate mononucleotide (NaMN) to nicotinic acid adenine dinucleotide (NaAD). This is Probable nicotinate-nucleotide adenylyltransferase from Thermomicrobium roseum (strain ATCC 27502 / DSM 5159 / P-2).